We begin with the raw amino-acid sequence, 527 residues long: Cytochrome P450 monooxyhenase eriA (527 aa).

Residues 17-37 traverse the membrane as a helical segment; that stretch reads LGVVDLSLLGVGAVIAFAWLF. 3 N-linked (GlcNAc...) asparagine glycosylation sites follow: Asn77, Asn274, and Asn297. Position 453 (Cys453) interacts with heme.

This sequence belongs to the cytochrome P450 family. Requires heme as cofactor.

The protein resides in the membrane. It catalyses the reaction cyathadiol + reduced [NADPH--hemoprotein reductase] + O2 = cyathatriol + oxidized [NADPH--hemoprotein reductase] + H2O + H(+). The protein operates within secondary metabolite biosynthesis. Cytochrome P450 monooxygenase; part of the gene cluster that mediates the biosynthesis of erinacines, cyathane-xylosides that show unique biological activities, including leishmanicidal activity, stimulating activity for nerve growth-factor synthesis, and agonistic activity toward the kappa opioid receptor. Within the pathway, eriA catalyzes C-11 hydroxylation in the presence of the short chain dehydrogenase/reductase (SDR) eriH, which leads to the production of cyathatriol. The first step of the erinacines biosynthesis pathway is catalyzed by the geranylgeranyl diphosphate (GGPP) synthase eriE via conversion of farnesyl pyrophosphate and isopentyl pyrophosphate into geranylgeranyl pyrophosphate (GGPP). GGPP is then substrate of the diterpene cyclase eriG for the production of cyatha-3,12-diene. The cytochrome P450 monooxygenase eriI then hydroxylates cyatha-3,12-diene at C-14 of the seven-membered ring to produce erinacol, which is further hydroxylated at C-15 by the cytochrome P450 monooxygenase eriC to yield cyathadiol. The cytochrome P450 monooxygenase eriA then catalyzes C-11 hydroxylation in the presence of the short chain dehydrogenase/reductase (SDR) eriH, which leads to the production of cyathatriol. The acetyltransferase eriL converts cyathatriol into 11-O-acetyl-cyathatriol. The SDR eriH catalyzes further oxidation of 11-O-acetyl-cyathatriol into 1-O-acetylcyathin A3. Finally, the glycosyl transferase eriJ tranfers xylose from UDP-xylose onto C-14 of 11-O-acetyl-cyathatriol to form eracine Q. EriJ is also able to convert 11-O-acetyl-cyathatriol to eracine Q2 by using UDP-D-glucose as cosubstrate, but at a lower rate. The chain is Cytochrome P450 monooxyhenase eriA from Hericium erinaceus (Lion's mane mushroom).